A 926-amino-acid chain; its full sequence is Alpha-aminoadipic semialdehyde synthase, mitochondrial (926 aa).

The transit peptide at 1–27 directs the protein to the mitochondrion; the sequence is MLRAQRLRLARLRACVSRGLHHKPVMA. The interval 28 to 455 is lysine-ketoglutarate reductase; it reads LRREDVNAWE…DAVITSNGLL (428 aa). Residues K48, K52, and K56 each carry the N6-acetyllysine modification. K93 is subject to N6-acetyllysine; alternate. An N6-succinyllysine; alternate modification is found at K93. An N6-acetyllysine modification is found at K128. Position 138 is an N6-acetyllysine; alternate (K138). K138 is modified (N6-succinyllysine; alternate). K274 carries the post-translational modification N6-succinyllysine. K286 bears the N6-acetyllysine; alternate mark. N6-succinyllysine; alternate is present on K286. K333 bears the N6-succinyllysine mark. At K458 the chain carries N6-acetyllysine; alternate. K458 is subject to N6-succinyllysine; alternate. The saccharopine dehydrogenase stretch occupies residues 477–926; sequence MSTKKKVLVL…VFNTQSTIKL (450 aa). The NAD(+) site is built by S488, D512, and Q516. K523 and K535 each carry N6-acetyllysine; alternate. N6-succinyllysine; alternate occurs at positions 523 and 535. L554, A576, and S577 together coordinate NAD(+). Position 577–578 (577–578) interacts with L-saccharopine; that stretch reads SY. K584 carries the post-translational modification N6-acetyllysine; alternate. Position 584 is an N6-succinyllysine; alternate (K584). L603, D604, and P605 together coordinate NAD(+). D604 is an L-saccharopine binding site. R703 contacts L-saccharopine. K707 carries the N6-acetyllysine modification. Residue 724 to 726 coordinates L-saccharopine; it reads TLR. K732 is modified (N6-succinyllysine). N6-acetyllysine is present on K739. K761 is subject to N6-acetyllysine; alternate. K761 bears the N6-succinyllysine; alternate mark. An N6-acetyllysine mark is found at K778 and K780.

This sequence in the N-terminal section; belongs to the AlaDH/PNT family. The protein in the C-terminal section; belongs to the saccharopine dehydrogenase family. Homotetramer.

It localises to the mitochondrion. The catalysed reaction is L-saccharopine + NADP(+) + H2O = L-lysine + 2-oxoglutarate + NADPH + H(+). It carries out the reaction L-saccharopine + NAD(+) + H2O = (S)-2-amino-6-oxohexanoate + L-glutamate + NADH + H(+). Its pathway is amino-acid degradation; L-lysine degradation via saccharopine pathway; glutaryl-CoA from L-lysine: step 1/6. It functions in the pathway amino-acid degradation; L-lysine degradation via saccharopine pathway; glutaryl-CoA from L-lysine: step 2/6. Bifunctional enzyme that catalyzes the first two steps in lysine degradation. The chain is Alpha-aminoadipic semialdehyde synthase, mitochondrial from Rattus norvegicus (Rat).